A 354-amino-acid polypeptide reads, in one-letter code: UDP-N-acetylglucosamine--N-acetylmuramyl-(pentapeptide) pyrophosphoryl-undecaprenol N-acetylglucosamine transferase (354 aa).

Residues 13–15, Asn-125, Ser-189, Ile-242, 261–266, and Gln-286 contribute to the UDP-N-acetyl-alpha-D-glucosamine site; these read SGG and ALTVSE.

The protein belongs to the glycosyltransferase 28 family. MurG subfamily.

It is found in the cell inner membrane. The enzyme catalyses di-trans,octa-cis-undecaprenyl diphospho-N-acetyl-alpha-D-muramoyl-L-alanyl-D-glutamyl-meso-2,6-diaminopimeloyl-D-alanyl-D-alanine + UDP-N-acetyl-alpha-D-glucosamine = di-trans,octa-cis-undecaprenyl diphospho-[N-acetyl-alpha-D-glucosaminyl-(1-&gt;4)]-N-acetyl-alpha-D-muramoyl-L-alanyl-D-glutamyl-meso-2,6-diaminopimeloyl-D-alanyl-D-alanine + UDP + H(+). It functions in the pathway cell wall biogenesis; peptidoglycan biosynthesis. In terms of biological role, cell wall formation. Catalyzes the transfer of a GlcNAc subunit on undecaprenyl-pyrophosphoryl-MurNAc-pentapeptide (lipid intermediate I) to form undecaprenyl-pyrophosphoryl-MurNAc-(pentapeptide)GlcNAc (lipid intermediate II). The chain is UDP-N-acetylglucosamine--N-acetylmuramyl-(pentapeptide) pyrophosphoryl-undecaprenol N-acetylglucosamine transferase from Buchnera aphidicola subsp. Acyrthosiphon pisum (strain 5A).